The following is a 413-amino-acid chain: Putative adhesin P1-like protein MPN_144 (413 aa).

3 stretches are compositionally biased toward polar residues: residues 1-13 (MGQQ…SAGN), 25-54 (SGDS…NLTP), and 355-376 (SFGT…VFGT). Disordered regions lie at residues 1–60 (MGQQ…DWPN) and 355–413 (SFGT…VSGH). Over residues 385 to 399 (LSGGGAGGGSSGSGQ) the composition is skewed to gly residues.

Belongs to the adhesin P1 family.

The protein is Putative adhesin P1-like protein MPN_144 of Mycoplasma pneumoniae (strain ATCC 29342 / M129 / Subtype 1) (Mycoplasmoides pneumoniae).